The following is a 426-amino-acid chain: UDP-N-acetylglucosamine 1-carboxyvinyltransferase (426 aa).

Position 22 to 23 (22 to 23) interacts with phosphoenolpyruvate; sequence KN. UDP-N-acetyl-alpha-D-glucosamine is bound at residue Arg-94. Residue Cys-118 is the Proton donor of the active site. Cys-118 is subject to 2-(S-cysteinyl)pyruvic acid O-phosphothioketal. Residues 123 to 127, Asp-309, and Ile-331 each bind UDP-N-acetyl-alpha-D-glucosamine; that span reads RPVDL.

Belongs to the EPSP synthase family. MurA subfamily.

It localises to the cytoplasm. It carries out the reaction phosphoenolpyruvate + UDP-N-acetyl-alpha-D-glucosamine = UDP-N-acetyl-3-O-(1-carboxyvinyl)-alpha-D-glucosamine + phosphate. Its pathway is cell wall biogenesis; peptidoglycan biosynthesis. Its function is as follows. Cell wall formation. Adds enolpyruvyl to UDP-N-acetylglucosamine. This is UDP-N-acetylglucosamine 1-carboxyvinyltransferase from Paracoccus denitrificans (strain Pd 1222).